Consider the following 544-residue polypeptide: Sialidase (544 aa).

The first 22 residues, 1–22 (MKKAVILFSLFCFLCAIPVVQA), serve as a signal peptide directing secretion. BNR repeat units lie at residues 239–250 (SRSTDGGKTWEK), 318–329 (AKSTDDGKTWSA), and 378–389 (MYSKDGGKNWKM). Residue glutamate 399 is part of the active site. Arginine 415 provides a ligand contact to substrate. One copy of the BNR 4 repeat lies at 425–436 (AITKDLGKTWTE). Arginine 479 lines the substrate pocket. A BNR 5 repeat occupies 485–496 (KISLDGGVTWSP).

Belongs to the glycosyl hydrolase 33 family.

The protein localises to the periplasm. It carries out the reaction Hydrolysis of alpha-(2-&gt;3)-, alpha-(2-&gt;6)-, alpha-(2-&gt;8)- glycosidic linkages of terminal sialic acid residues in oligosaccharides, glycoproteins, glycolipids, colominic acid and synthetic substrates.. Functionally, sialidases have been suggested to be pathogenic factors in microbial infections. The chain is Sialidase (nanH) from Bacteroides fragilis (strain YCH46).